The chain runs to 103 residues: Large ribosomal subunit protein uL24 (103 aa).

Belongs to the universal ribosomal protein uL24 family. Part of the 50S ribosomal subunit.

Functionally, one of two assembly initiator proteins, it binds directly to the 5'-end of the 23S rRNA, where it nucleates assembly of the 50S subunit. One of the proteins that surrounds the polypeptide exit tunnel on the outside of the subunit. The polypeptide is Large ribosomal subunit protein uL24 (Rhizobium meliloti (strain 1021) (Ensifer meliloti)).